A 1061-amino-acid chain; its full sequence is TonB-dependent transporter Oar (1061 aa).

Positions 1–26 (MHLNRVLRETGVVVAAGLLYGSAAFA) are cleaved as a signal peptide. The 123-residue stretch at 121–243 (EIVGAPPTID…TGGVINAVTR (123 aa)) folds into the TBDR plug domain. Positions 248–1061 (EFHGSVFANW…QVRFGIRYTF (814 aa)) constitute a TBDR beta-barrel domain. Residues 701–722 (RSLAEPGQGTATSCDPSSFESQ) form a disordered region. Positions 709–722 (GTATSCDPSSFESQ) are enriched in polar residues.

This sequence belongs to the TonB-dependent receptor family. Interacts with TonB. Part of a transport system composed of the outer membrane transporter Oar, the trans-periplasmic binding protein TonB and the inner membrane proteins ExbB and ExbD.

It is found in the cell outer membrane. In terms of biological role, required for secretion of the protease PopC across the bacterial outer membrane. Binds and probably transports PopC from the periplasm to the extracellular milieu. It derives its energy for transport by interacting with the trans-periplasmic membrane protein TonB. Required for cellular adhesion during fruiting body formation, a multicellular developmental program that is induced in response to starvation. In Myxococcus xanthus, this protein is TonB-dependent transporter Oar.